Reading from the N-terminus, the 287-residue chain is Bifunctional protein FolD (287 aa).

Residues 171–173 (GHS), I196, and I237 each bind NADP(+).

Belongs to the tetrahydrofolate dehydrogenase/cyclohydrolase family. As to quaternary structure, homodimer.

The enzyme catalyses (6R)-5,10-methylene-5,6,7,8-tetrahydrofolate + NADP(+) = (6R)-5,10-methenyltetrahydrofolate + NADPH. It catalyses the reaction (6R)-5,10-methenyltetrahydrofolate + H2O = (6R)-10-formyltetrahydrofolate + H(+). Its pathway is one-carbon metabolism; tetrahydrofolate interconversion. In terms of biological role, catalyzes the oxidation of 5,10-methylenetetrahydrofolate to 5,10-methenyltetrahydrofolate and then the hydrolysis of 5,10-methenyltetrahydrofolate to 10-formyltetrahydrofolate. This chain is Bifunctional protein FolD, found in Methanosarcina mazei (strain ATCC BAA-159 / DSM 3647 / Goe1 / Go1 / JCM 11833 / OCM 88) (Methanosarcina frisia).